We begin with the raw amino-acid sequence, 636 residues long: Chaperone protein DnaK (636 aa).

T203 bears the Phosphothreonine; by autocatalysis mark. A disordered region spans residues 602–636; sequence VYGKQQEGAPAQEEPSAEGKKADDEGTVEGEFREV. Basic and acidic residues predominate over residues 618 to 636; that stretch reads AEGKKADDEGTVEGEFREV.

Belongs to the heat shock protein 70 family.

Functionally, acts as a chaperone. The protein is Chaperone protein DnaK of Dehalococcoides mccartyi (strain ATCC BAA-2100 / JCM 16839 / KCTC 5957 / BAV1).